An 873-amino-acid polypeptide reads, in one-letter code: F-BAR domain only protein 1 (873 aa).

The F-BAR domain maps to 1–248; sequence MSYFGEHFWG…NVENVTVDML (248 aa). Positions 1-275 are mediates membrane-binding; sequence MSYFGEHFWG…LDFDAYSSAA (275 aa). The interval 153-172 is disordered; the sequence is RENTSQKEMDKAETKSKKAA. Residues 155–178 adopt a coiled-coil conformation; the sequence is NTSQKEMDKAETKSKKAADSLRRS. The tract at residues 267–439 is mediates interaction with the adaptor protein complex AP-2; that stretch reads DFDAYSSAAL…KSLFGPPLES (173 aa). A phosphoserine mark is found at Ser-295, Ser-343, and Ser-368. Residues 302–347 form a disordered region; it reads SVDFLESDSGVPPEVDDEGFTVRPDISQNNGAEPPRFSSSDSDFDD. Disordered stretches follow at residues 381–600 and 813–833; these read GSLI…RGPS and SGHL…SPVA. A compositionally biased stretch (low complexity) spans 447 to 466; that stretch reads TGSSSLGFTSSPSPFSSSSP. Ser-518 is subject to Phosphoserine. The segment covering 567-576 has biased composition (low complexity); the sequence is SLSPSPLGSS. The interval 593–873 is mediates interaction with AGFG1, CALM, DAB2, EPS15, EPS15R, ITSN1 and clathrin; it reads HGISRGPSPV…FATGMYLVSC (281 aa). A Phosphoserine modification is found at Ser-600. Positions 609–872 constitute an MHD domain; sequence ALPVATAFTE…RFATGMYLVS (264 aa). The span at 816–827 shows a compositional bias: polar residues; sequence LSASWQPQSGPS.

Belongs to the FCHO family. In terms of assembly, may oligomerize and form homotetramer. Interacts with AP2A2 and AP2B1; 2 subunits of the adaptor protein complex AP-2. Interacts with DAB2. Interacts with clathrin (CLTC or CLTCL1). Interacts with EPS15, EPS15R and ITSN1. Interacts with AGFG1 and CALM. May interact with ACVR1; linking this receptor to clathrin-mediated endocytosis. In terms of tissue distribution, mainly detected in brain and spleen.

The protein resides in the membrane. The protein localises to the clathrin-coated pit. Functionally, functions in an early step of clathrin-mediated endocytosis. Has both a membrane binding/bending activity and the ability to recruit proteins essential to the formation of functional clathrin-coated pits. May regulate Bmp signaling by regulating clathrin-mediated endocytosis of Bmp receptors. Involved in the regulation of T-cell poliferation and activation. Affects TCR clustering upon receptor triggering and modulates its internalisation, playing a role in TCR-dependent T-cell activation. This is F-BAR domain only protein 1 from Mus musculus (Mouse).